We begin with the raw amino-acid sequence, 628 residues long: Forkhead box protein O (628 aa).

Residue threonine 50 is modified to Phosphothreonine; by PKB/AKT1. Residue serine 81 is modified to Phosphoserine. The segment at residues 101–207 is a DNA-binding region (fork-head); it reads WGNLSYADLI…ETSRYEKRRG (107 aa). Disordered regions lie at residues 188–210 and 223–270; these read KSVR…GRAK and GLND…SSCG. Serine 196 carries the post-translational modification Phosphoserine; by PKB/AKT1. 2 stretches are compositionally biased toward polar residues: residues 227-236 and 261-270; these read ATPSPSSSVS and RASSNASSCG. A Phosphoserine; by PKB/AKT1 modification is found at serine 264. Phosphoserine is present on residues serine 267, serine 268, and serine 273. Disordered stretches follow at residues 327 to 373 and 398 to 451; these read SAAS…SLQP and NSVT…QQQQ. Residues 334 to 343 are compositionally biased toward pro residues; that stretch reads TQPPPPPYPA. The span at 344-359 shows a compositional bias: low complexity; it reads PQQQQQQQPQQQQAYT. The span at 411 to 423 shows a compositional bias: polar residues; sequence SEPSSDSLNTYSN. The span at 438–451 shows a compositional bias: low complexity; sequence QQQRQQQQQQQQQQ.

In terms of assembly, interacts with melt.

The protein resides in the cytoplasm. The protein localises to the nucleus. In terms of biological role, transcription factor involved in the regulation of the insulin signaling pathway. Consistently activates both the downstream target Thor\d4EBP and the feedback control target InR. Involved in negative regulation of the cell cycle, modulating cell growth and proliferation. In response to cellular stresses, such as nutrient deprivation or increased levels of reactive oxygen species, foxo is activated and inhibits growth through the action of target genes such as Thor. Foxo activated in the adult fat body can regulate lifespan in adults; an insulin peptide itself may function as one secondary messenger of insulin-regulated aging. Also regulates Lip4, homolog of human acid lipases, thereby acting as a key modulator of lipid metabolism by insulin signaling and integrates insulin responses to glucose and lipid homeostasis. The chain is Forkhead box protein O from Drosophila willistoni (Fruit fly).